The primary structure comprises 156 residues: Cyanate hydratase (156 aa).

Active-site residues include Arg-96, Glu-99, and Ser-122.

It belongs to the cyanase family.

The enzyme catalyses cyanate + hydrogencarbonate + 3 H(+) = NH4(+) + 2 CO2. Functionally, catalyzes the reaction of cyanate with bicarbonate to produce ammonia and carbon dioxide. The polypeptide is Cyanate hydratase (Pseudomonas aeruginosa (strain UCBPP-PA14)).